The primary structure comprises 870 residues: Breast cancer anti-estrogen resistance protein 1 (870 aa).

Met1 bears the N-acetylmethionine mark. The SH3 domain maps to 3 to 65; sequence HLNVLAKALY…PGNRLKILVG (63 aa). The segment at 70-156 is disordered; it reads KPAGPGPGPP…TFSKQTPHHP (87 aa). Positions 73–85 are enriched in pro residues; that stretch reads GPGPGPPATPAQP. Residues 97–111 show a composition bias toward polar residues; sequence SQYTPMLPNTYQPQP. Positions 115-416 are substrate for kinases; the sequence is YLVPTPSKAQ…SGVYAVPPPA (302 aa). The residue at position 128 (Tyr128) is a Phosphotyrosine; by SRC. A phosphoserine mark is found at Ser134 and Ser139. Over residues 135-151 the composition is skewed to polar residues; the sequence is PQFQSPPAKQTSTFSKQ. Tyr234 is subject to Phosphotyrosine. Tyr249 is modified (phosphotyrosine; by ABL1). At Thr269 the chain carries Phosphothreonine. Ser292 is modified (phosphoserine). 3 positions are modified to phosphotyrosine: Tyr362, Tyr372, and Tyr410. Disordered stretches follow at residues 411 to 449, 609 to 658, and 715 to 734; these read AVPPPAEREAPAEGKRLSASSTGSTRSSQSASSLEVAGP, KATA…NSEG, and IDHDLANWTPAQPLAPGRTG. Over residues 416 to 426 the composition is skewed to basic and acidic residues; sequence AEREAPAEGKR. Low complexity predominate over residues 427–444; that stretch reads LSASSTGSTRSSQSASSL. A phosphoserine mark is found at Ser428, Ser437, and Ser639. Residues 626–655 are compositionally biased toward polar residues; sequence TDKTSSIQSRPLPSPPKFTSQDSPDGQYEN. The SH3-binding signature appears at 635-643; sequence RPLPSPPKF. The divergent helix-loop-helix motif stretch occupies residues 746–796; sequence FYLEQCEANLTTLTNAVDAFFTAVATNQPPKIFVAHSKFVILSAHKLVFIG.

The protein belongs to the CAS family. Forms complexes in vivo with PTK2/FAK1, adapter protein CRKL and LYN kinase. Heterodimerizes with NEDD9. Component of a complex comprised of SH2D3C, BCAR1/CAS, and CRK. Within the complex, interacts with SH2D3C (via C-terminus), and CRK. Part of a complex comprised of PTPRA, BCAR1, BCAR3 (via SH2 domain) and SRC; the formation of the complex is dependent on integrin mediated-tyrosine phosphorylation of PTPRA. Interacts with BCAR3 (via Ras-GEF domain); the interaction regulates adhesion-dependent serine phosphorylation. Interacts with SMAD2 and SMAD3. Interacts with NPHP1. Interacts with PTK2B/PYK2. Interacts (via C-terminus) with SH2D3C/CHAT isoform 2 (via C-terminus). Interacts with activated CSPG4. Interacts with BMX, INPPL1/SHIP2 and PEAK1. Part of a collagen-stimulated complex involved in cell migration made of CDC42, CRK, TNK2 and BCAR1/p130cas. Interacts with TNK2 via SH3 domains. Interacts (when tyrosine-phosphorylated) with tensin TNS1; the interaction is increased by phosphorylation of TNS1. In terms of processing, PTK2/FAK1 activation mediates phosphorylation at the YDYVHL motif; phosphorylation is most likely catalyzed by SRC family members. SRC-family kinases are recruited to the phosphorylated sites and can phosphorylate other tyrosine residues. Tyrosine phosphorylation is triggered by integrin-mediated adhesion of cells to the extracellular matrix. Dephosphorylated by PTPN14 at Tyr-128. Post-translationally, phosphorylated by SRC kinase in a EDN1- and PTK2B-mediated manner; phosphorylation strengthens its interaction with BCAR3 as part of the PTK2B/BCAR1/BCAR3/RAP1 signaling pathway. Expressed in B-cells (at protein level). Widely expressed with an abundant expression in the testis. Low level of expression seen in the liver, thymus, and peripheral blood leukocytes.

It is found in the cell junction. Its subcellular location is the focal adhesion. The protein resides in the cytoplasm. It localises to the cell projection. The protein localises to the axon. Functionally, docking protein which plays a central coordinating role for tyrosine kinase-based signaling related to cell adhesion. Implicated in induction of cell migration and cell branching. Involved in the BCAR3-mediated inhibition of TGFB signaling. The protein is Breast cancer anti-estrogen resistance protein 1 (BCAR1) of Homo sapiens (Human).